The chain runs to 338 residues: Ketol-acid reductoisomerase (NADP(+)) (338 aa).

The 181-residue stretch at 1-181 (MKVFYDKDAD…GGGRAGIIET (181 aa)) folds into the KARI N-terminal Rossmann domain. NADP(+) contacts are provided by residues 24-27 (YGSQ), Arg-47, and Ser-52. Residue His-107 is part of the active site. Position 133 (Gly-133) interacts with NADP(+). The region spanning 182-327 (NFREETETDL…AKLRAMMPWI (146 aa)) is the KARI C-terminal knotted domain. The Mg(2+) site is built by Asp-190, Glu-194, Glu-226, and Glu-230. Residue Ser-251 participates in substrate binding.

It belongs to the ketol-acid reductoisomerase family. It depends on Mg(2+) as a cofactor.

The enzyme catalyses (2R)-2,3-dihydroxy-3-methylbutanoate + NADP(+) = (2S)-2-acetolactate + NADPH + H(+). It carries out the reaction (2R,3R)-2,3-dihydroxy-3-methylpentanoate + NADP(+) = (S)-2-ethyl-2-hydroxy-3-oxobutanoate + NADPH + H(+). Its pathway is amino-acid biosynthesis; L-isoleucine biosynthesis; L-isoleucine from 2-oxobutanoate: step 2/4. It participates in amino-acid biosynthesis; L-valine biosynthesis; L-valine from pyruvate: step 2/4. Functionally, involved in the biosynthesis of branched-chain amino acids (BCAA). Catalyzes an alkyl-migration followed by a ketol-acid reduction of (S)-2-acetolactate (S2AL) to yield (R)-2,3-dihydroxy-isovalerate. In the isomerase reaction, S2AL is rearranged via a Mg-dependent methyl migration to produce 3-hydroxy-3-methyl-2-ketobutyrate (HMKB). In the reductase reaction, this 2-ketoacid undergoes a metal-dependent reduction by NADPH to yield (R)-2,3-dihydroxy-isovalerate. The sequence is that of Ketol-acid reductoisomerase (NADP(+)) from Ralstonia pickettii (strain 12J).